The chain runs to 335 residues: 3-hydroxy-3-methylglutaryl-CoA lyase, cytoplasmic (335 aa).

Glycine 2 carries N-myristoyl glycine lipidation. The 268-residue stretch at valine 43–methionine 310 folds into the Pyruvate carboxyltransferase domain. Substrate is bound at residue arginine 51. Aspartate 52 is an a divalent metal cation binding site. The residue at position 58 (lysine 58) is an N6-acetyllysine. 2 residues coordinate a divalent metal cation: histidine 243 and histidine 245. Cysteine 276 is an active-site residue. Asparagine 285 provides a ligand contact to a divalent metal cation.

It belongs to the HMG-CoA lyase family. It depends on a divalent metal cation as a cofactor.

It is found in the cytoplasm. The protein resides in the cytosol. It localises to the endoplasmic reticulum membrane. The enzyme catalyses (3S)-3-hydroxy-3-methylglutaryl-CoA = acetoacetate + acetyl-CoA. The protein operates within metabolic intermediate metabolism; (S)-3-hydroxy-3-methylglutaryl-CoA degradation; acetoacetate from (S)-3-hydroxy-3-methylglutaryl-CoA: step 1/1. Functionally, non-mitochondrial 3-hydroxy-3-methylglutaryl-CoA lyase that catalyzes a cation-dependent cleavage of (S)-3-hydroxy-3-methylglutaryl-CoA into acetyl-CoA and acetoacetate, a key step in ketogenesis, the products of which support energy production in nonhepatic animal tissues. This chain is 3-hydroxy-3-methylglutaryl-CoA lyase, cytoplasmic (hmgcll1), found in Danio rerio (Zebrafish).